Reading from the N-terminus, the 101-residue chain is MAKKSMIAKNEQRKVIVERYAAKRLELKKALVDPASTDEAREAARLGLQKLPRNASPVRLRNRDIIDGRPRGTFQKFGISRVRFRDMAHRGELPGITKSSW.

It belongs to the universal ribosomal protein uS14 family. In terms of assembly, part of the 30S ribosomal subunit. Contacts proteins S3 and S10.

Binds 16S rRNA, required for the assembly of 30S particles and may also be responsible for determining the conformation of the 16S rRNA at the A site. The polypeptide is Small ribosomal subunit protein uS14 (Arthrobacter sp. (strain FB24)).